Here is a 106-residue protein sequence, read N- to C-terminus: Transcription initiation factor IIA subunit 2 (106 aa).

The protein belongs to the TFIIA subunit 2 family. TFIIA is a heterodimer of the large unprocessed subunit 1 and a small subunit gamma. It was originally believed to be a heterotrimer of an alpha, a beta and a gamma subunit.

Its subcellular location is the nucleus. Its function is as follows. TFIIA is a component of the transcription machinery of RNA polymerase II and plays an important role in transcriptional activation. TFIIA in a complex with TBP mediates transcriptional activity. This Arabidopsis thaliana (Mouse-ear cress) protein is Transcription initiation factor IIA subunit 2 (TFIIA-S).